Consider the following 371-residue polypeptide: Cytochrome b (371 aa).

4 consecutive transmembrane segments (helical) span residues 25 to 45 (FGSM…FLAV), 69 to 90 (WMMQ…YTHI), 105 to 125 (WLSG…GYVL), and 170 to 190 (FFAL…LHIM). Residues H75 and H89 each contribute to the heme b site. Residues H174 and H188 each coordinate heme b. H193 provides a ligand contact to a ubiquinone. 4 helical membrane-spanning segments follow: residues 218–238 (YKDM…VAFF), 280–300 (LGGA…PFTH), 312–332 (IMQL…WAAT), and 339–358 (FTTI…ITNP).

This sequence belongs to the cytochrome b family. In terms of assembly, the cytochrome bc1 complex contains 3 respiratory subunits (MT-CYB, CYC1 and UQCRFS1), 2 core proteins (UQCRC1 and UQCRC2) and probably 6 low-molecular weight proteins. The cofactor is heme b.

It is found in the mitochondrion inner membrane. Functionally, component of the ubiquinol-cytochrome c reductase complex (complex III or cytochrome b-c1 complex) that is part of the mitochondrial respiratory chain. The b-c1 complex mediates electron transfer from ubiquinol to cytochrome c. Contributes to the generation of a proton gradient across the mitochondrial membrane that is then used for ATP synthesis. The sequence is that of Cytochrome b (MT-CYB) from Eryx colubrinus colubrinus.